Here is a 136-residue protein sequence, read N- to C-terminus: Large ribosomal subunit protein uL16 (136 aa).

This sequence belongs to the universal ribosomal protein uL16 family. In terms of assembly, part of the 50S ribosomal subunit.

Functionally, binds 23S rRNA and is also seen to make contacts with the A and possibly P site tRNAs. The polypeptide is Large ribosomal subunit protein uL16 (Aliivibrio fischeri (strain ATCC 700601 / ES114) (Vibrio fischeri)).